A 343-amino-acid chain; its full sequence is Homeobox protein Hox-D13 (343 aa).

2 disordered regions span residues 1-28 (MSRA…SSSS) and 78-115 (GTSE…PAAA). The span at 85–115 (SSSSSSSSAVVAARPEAPPAKECPAPTPAAA) shows a compositional bias: low complexity. Positions 276-335 (GRKKRVPYTKLQLKELENEYAINKFINKDKRRRISAATNLSERQVTIWFQNRRVKDKKIV) form a DNA-binding region, homeobox.

It belongs to the Abd-B homeobox family.

The protein localises to the nucleus. Sequence-specific transcription factor that binds gene promoters and activates their transcription. Part of a developmental regulatory system that provides cells with specific positional identities on the anterior-posterior axis. This Homo sapiens (Human) protein is Homeobox protein Hox-D13 (HOXD13).